The sequence spans 497 residues: mRNA cleavage and polyadenylation factor CLP1 (497 aa).

The segment at 1–20 (MSIPGLGQIAPQQPTTSTTR) is disordered. ATP contacts are provided by residues Glu-29 and 168-173 (DSGKTT).

The protein belongs to the Clp1 family. Clp1 subfamily. As to quaternary structure, component of a pre-mRNA cleavage factor complex. Interacts directly with PCF11.

The protein localises to the nucleus. In terms of biological role, required for endonucleolytic cleavage during polyadenylation-dependent pre-mRNA 3'-end formation. The polypeptide is mRNA cleavage and polyadenylation factor CLP1 (Chaetomium globosum (strain ATCC 6205 / CBS 148.51 / DSM 1962 / NBRC 6347 / NRRL 1970) (Soil fungus)).